A 41-amino-acid chain; its full sequence is Large ribosomal subunit protein bL36 (41 aa).

This sequence belongs to the bacterial ribosomal protein bL36 family.

The sequence is that of Large ribosomal subunit protein bL36 from Methylocella silvestris (strain DSM 15510 / CIP 108128 / LMG 27833 / NCIMB 13906 / BL2).